A 269-amino-acid chain; its full sequence is Regulatory protein RecX (269 aa).

This sequence belongs to the RecX family.

It localises to the cytoplasm. In terms of biological role, modulates RecA activity. The sequence is that of Regulatory protein RecX from Geobacillus thermodenitrificans (strain NG80-2).